The following is a 215-amino-acid chain: LexA repressor (215 aa).

The segment at residues 28–48 (RAEIAAELGFSSPNAAEEHLR) is a DNA-binding region (H-T-H motif). Catalysis depends on for autocatalytic cleavage activity residues serine 133 and lysine 170.

Belongs to the peptidase S24 family. As to quaternary structure, homodimer.

The catalysed reaction is Hydrolysis of Ala-|-Gly bond in repressor LexA.. In terms of biological role, represses a number of genes involved in the response to DNA damage (SOS response), including recA and lexA. In the presence of single-stranded DNA, RecA interacts with LexA causing an autocatalytic cleavage which disrupts the DNA-binding part of LexA, leading to derepression of the SOS regulon and eventually DNA repair. In Burkholderia mallei (strain NCTC 10247), this protein is LexA repressor.